The chain runs to 234 residues: Small ribosomal subunit protein uS10m (234 aa).

The N-terminal 23 residues, 1–23, are a transit peptide targeting the mitochondrion; that stretch reads MLRIGYRGFSTRSRVFKLSPQEY.

This sequence belongs to the universal ribosomal protein uS10 family. Component of the mitochondrial small ribosomal subunit (mt-SSU).

The protein resides in the mitochondrion. Functionally, component of the mitochondrial ribosome (mitoribosome), a dedicated translation machinery responsible for the synthesis of mitochondrial genome-encoded proteins, including at least some of the essential transmembrane subunits of the mitochondrial respiratory chain. The mitoribosomes are attached to the mitochondrial inner membrane and translation products are cotranslationally integrated into the membrane. This is Small ribosomal subunit protein uS10m (RSM10) from Candida albicans (strain SC5314 / ATCC MYA-2876) (Yeast).